Consider the following 69-residue polypeptide: U2-agatoxin-Ao1w (69 aa).

Residues 1 to 20 (MRAIISLLLISAMVFSMIEA) form the signal peptide. Residues 21 to 34 (VPVEEGLQLFEGER) constitute a propeptide that is removed on maturation. Disulfide bonds link C37–C53, C44–C58, and C52–C68.

This sequence belongs to the neurotoxin 01 (U2-agtx) family. As to expression, expressed by the venom gland.

It localises to the secreted. In terms of biological role, insect active toxin causing rapid but reversible paralysis in crickets. No activity shown in mammals. Does not show effect on mammalian voltage-gated calcium channels. This chain is U2-agatoxin-Ao1w, found in Agelena orientalis (Funnel-web spider).